Consider the following 152-residue polypeptide: Ribonuclease H (152 aa).

In terms of domain architecture, RNase H type-1 spans 1 to 142; the sequence is MNSKVVIYTD…ADKLAVQGRE (142 aa). Positions 10, 48, 70, and 134 each coordinate Mg(2+).

This sequence belongs to the RNase H family. Monomer. Requires Mg(2+) as cofactor.

It is found in the cytoplasm. The enzyme catalyses Endonucleolytic cleavage to 5'-phosphomonoester.. In terms of biological role, endonuclease that specifically degrades the RNA of RNA-DNA hybrids. The chain is Ribonuclease H from Rickettsia akari (strain Hartford).